The following is a 298-amino-acid chain: Probable endonuclease 4 (298 aa).

Zn(2+)-binding residues include histidine 70, histidine 111, glutamate 146, aspartate 180, histidine 183, histidine 215, aspartate 228, histidine 230, and glutamate 260.

The protein belongs to the AP endonuclease 2 family. Requires Zn(2+) as cofactor.

It carries out the reaction Endonucleolytic cleavage to 5'-phosphooligonucleotide end-products.. Endonuclease IV plays a role in DNA repair. It cleaves phosphodiester bonds at apurinic or apyrimidinic (AP) sites, generating a 3'-hydroxyl group and a 5'-terminal sugar phosphate. The chain is Probable endonuclease 4 from Halalkalibacterium halodurans (strain ATCC BAA-125 / DSM 18197 / FERM 7344 / JCM 9153 / C-125) (Bacillus halodurans).